A 564-amino-acid chain; its full sequence is MTDTRTKRRMNWNSHHITQGDERAPNRAMLRAVGFEDGDFDKAIIGVAHAQSNITPCNNGLGELADHITGALREGGAMPQVYGTITVSDGISMGTEGMKCSLVSREVIADSIETVSRGQSHDGLIVVGGCDKNMPGAMIGIARLNIPAIFVYGGTIKPGHYQGKDLTIVSVFEAVGAYGAGKMSREDFEQIEKRACPGNGSCGGMYTANTMSSAFEAMGMSLPYSSTMSAVDAEKAVSAADSARALIRLIEQDIRPLDILTKKAFENAITVVMAVGGSTNAVLHLMAIAHACGVDLTLEDFERIRERTPVFCDLKPSGKYVATDLHEVGGIPRVMKMLLKAGLLHGDCLTVTGQTVAENLADVPDQPDPGQDVILPFDQPLYSQGHLAILRGNLAPEGSVAKISGLRQIKITGPARVFDSEEECMAAIMGDQIKAGDVIVIRYEGPKGGPGMREMLSPTSAIIGKGLGDSVGLITDGRFSGGTYGLVVGHVAPEAYVGGPIALVQEGDIIELNAETCELTLHVDDAELERRRAAWVAPEPRYRRGVLAKYARLVGSAARGAVTD.

The span at 1 to 10 (MTDTRTKRRM) shows a compositional bias: basic residues. Residues 1–23 (MTDTRTKRRMNWNSHHITQGDER) form a disordered region. Cys-57 is a [2Fe-2S] cluster binding site. A Mg(2+)-binding site is contributed by Asp-89. Residue Cys-130 participates in [2Fe-2S] cluster binding. Residues Asp-131 and Lys-132 each contribute to the Mg(2+) site. An N6-carboxylysine modification is found at Lys-132. [2Fe-2S] cluster is bound at residue Cys-202. Glu-454 provides a ligand contact to Mg(2+). Ser-480 (proton acceptor) is an active-site residue.

Belongs to the IlvD/Edd family. As to quaternary structure, homodimer. [2Fe-2S] cluster serves as cofactor. The cofactor is Mg(2+).

The enzyme catalyses (2R)-2,3-dihydroxy-3-methylbutanoate = 3-methyl-2-oxobutanoate + H2O. It carries out the reaction (2R,3R)-2,3-dihydroxy-3-methylpentanoate = (S)-3-methyl-2-oxopentanoate + H2O. It participates in amino-acid biosynthesis; L-isoleucine biosynthesis; L-isoleucine from 2-oxobutanoate: step 3/4. The protein operates within amino-acid biosynthesis; L-valine biosynthesis; L-valine from pyruvate: step 3/4. In terms of biological role, functions in the biosynthesis of branched-chain amino acids. Catalyzes the dehydration of (2R,3R)-2,3-dihydroxy-3-methylpentanoate (2,3-dihydroxy-3-methylvalerate) into 2-oxo-3-methylpentanoate (2-oxo-3-methylvalerate) and of (2R)-2,3-dihydroxy-3-methylbutanoate (2,3-dihydroxyisovalerate) into 2-oxo-3-methylbutanoate (2-oxoisovalerate), the penultimate precursor to L-isoleucine and L-valine, respectively. This Deinococcus geothermalis (strain DSM 11300 / CIP 105573 / AG-3a) protein is Dihydroxy-acid dehydratase.